Consider the following 212-residue polypeptide: Fibrillarin-like rRNA/tRNA 2'-O-methyltransferase (212 aa).

Residues 1–37 are disordered; that stretch reads MSEPNLPAGVERREIGGETRLATRGPPVYGEPTADGW. S-adenosyl-L-methionine contacts are provided by residues 74–75, 90–91, 115–116, and 136–139; these read TT, EF, DA, and DVAT.

It belongs to the methyltransferase superfamily. Fibrillarin family. In terms of assembly, interacts with nop5. Component of box C/D small ribonucleoprotein (sRNP) particles that contain rpl7ae, FlpA and nop5, plus a guide RNA.

Functionally, involved in pre-rRNA and tRNA processing. Utilizes the methyl donor S-adenosyl-L-methionine to catalyze the site-specific 2'-hydroxyl methylation of ribose moieties in rRNA and tRNA. Site specificity is provided by a guide RNA that base pairs with the substrate. Methylation occurs at a characteristic distance from the sequence involved in base pairing with the guide RNA. The polypeptide is Fibrillarin-like rRNA/tRNA 2'-O-methyltransferase (Halorubrum lacusprofundi (strain ATCC 49239 / DSM 5036 / JCM 8891 / ACAM 34)).